Reading from the N-terminus, the 89-residue chain is Small ribosomal subunit protein uS15 (89 aa).

It belongs to the universal ribosomal protein uS15 family. As to quaternary structure, part of the 30S ribosomal subunit. Forms a bridge to the 50S subunit in the 70S ribosome, contacting the 23S rRNA.

Its function is as follows. One of the primary rRNA binding proteins, it binds directly to 16S rRNA where it helps nucleate assembly of the platform of the 30S subunit by binding and bridging several RNA helices of the 16S rRNA. Forms an intersubunit bridge (bridge B4) with the 23S rRNA of the 50S subunit in the ribosome. The chain is Small ribosomal subunit protein uS15 from Bacteroides fragilis (strain ATCC 25285 / DSM 2151 / CCUG 4856 / JCM 11019 / LMG 10263 / NCTC 9343 / Onslow / VPI 2553 / EN-2).